Consider the following 168-residue polypeptide: Small ribosomal subunit protein uS4 (168 aa).

Residues 103–167 enclose the S4 RNA-binding domain; it reads RRLQTIVYKK…SPFKKSIEEK (65 aa).

The protein belongs to the universal ribosomal protein uS4 family. In terms of assembly, part of the 30S ribosomal subunit. Contacts protein S5. The interaction surface between S4 and S5 is involved in control of translational fidelity.

Its function is as follows. One of the primary rRNA binding proteins, it binds directly to 16S rRNA where it nucleates assembly of the body of the 30S subunit. Functionally, with S5 and S12 plays an important role in translational accuracy. The sequence is that of Small ribosomal subunit protein uS4 from Staphylothermus marinus (strain ATCC 43588 / DSM 3639 / JCM 9404 / F1).